The chain runs to 623 residues: Chaperone protein DnaK (623 aa).

The residue at position 174 (Thr-174) is a Phosphothreonine; by autocatalysis. Disordered regions lie at residues Ile-470–Val-504 and Gly-578–Lys-623. Basic and acidic residues predominate over residues Glu-481–Val-504. Residues Gly-578–Ser-604 are compositionally biased toward low complexity. A compositionally biased stretch (basic and acidic residues) spans Gly-614–Lys-623.

The protein belongs to the heat shock protein 70 family.

Acts as a chaperone. The sequence is that of Chaperone protein DnaK from Lactobacillus gasseri (strain ATCC 33323 / DSM 20243 / BCRC 14619 / CIP 102991 / JCM 1131 / KCTC 3163 / NCIMB 11718 / NCTC 13722 / AM63).